Consider the following 242-residue polypeptide: Putative S-adenosyl-L-methionine-dependent methyltransferase Mmcs_0580 (242 aa).

S-adenosyl-L-methionine contacts are provided by residues aspartate 104 and 134–135 (DL).

The protein belongs to the UPF0677 family.

Functionally, exhibits S-adenosyl-L-methionine-dependent methyltransferase activity. This chain is Putative S-adenosyl-L-methionine-dependent methyltransferase Mmcs_0580, found in Mycobacterium sp. (strain MCS).